The sequence spans 450 residues: Phosphoglucosamine mutase (450 aa).

Serine 101 functions as the Phosphoserine intermediate in the catalytic mechanism. Serine 101, aspartate 240, aspartate 242, and aspartate 244 together coordinate Mg(2+). Serine 101 carries the phosphoserine modification.

It belongs to the phosphohexose mutase family. Mg(2+) is required as a cofactor. Activated by phosphorylation. Phosphorylated by StkP in vivo.

It carries out the reaction alpha-D-glucosamine 1-phosphate = D-glucosamine 6-phosphate. In terms of biological role, catalyzes the conversion of glucosamine-6-phosphate to glucosamine-1-phosphate. In Streptococcus pneumoniae (strain ATCC BAA-255 / R6), this protein is Phosphoglucosamine mutase.